Consider the following 214-residue polypeptide: MGLRRWLRSACCCCPCRCLEEPARPEKEPLVSGNNPYSSFGATLERDDEKNLWSMPHDVSHTEADDDRILYNLIVIRNQQTKDSEEWQRLNYDIYTLRQIRREVRNRWRRILEDLGFQREADSLLSVTKLSTMSDSKNTRKAREMLLKLAEETSIFPASWELSERYLLVVDRLIALDAAEDFFKIASQMYPKKPGVPCLVDGQRKLHCLPFPSP.

Positions 162–172 (LSERYLLVVDR) match the Cholesterol-binding sequence motif motif. S213 carries the phosphoserine modification.

This sequence belongs to the melanoregulin family. In terms of assembly, identified in a complex with RILP and DCTN1; interacts directly with RILP, but does not interact directly with DCTN1. Interacts with PRPH2. Palmitoylated. Palmitoylation is required to maintain the protein at the melanosome membrane. In terms of tissue distribution, detected in melanocytes. Expressed in retina, in retinal pigment epithelium (at protein level). Widely expressed with higher expression in skin, heart, liver, testis and thymus. Detected in retina, in retinal pigment epithelium cells.

It is found in the apical cell membrane. It localises to the melanosome membrane. Its subcellular location is the lysosome membrane. The protein localises to the cytoplasmic vesicle membrane. Functionally, probably functions as a cargo-recognition protein that couples cytoplasmic vesicles to the transport machinery. Plays a role in hair pigmentation, a process that involves shedding of melanosome-containing vesicles from melanocytes, followed by phagocytosis of the melanosome-containing vesicles by keratinocytes. Functions on melanosomes as receptor for RILP and the complex formed by RILP and DCTN1, and thereby contributes to retrograde melanosome transport from the cell periphery to the center. Overexpression causes accumulation of late endosomes and/or lysosomes at the microtubule organising center (MTOC) at the center of the cell. Probably binds cholesterol and requires the presence of cholesterol in membranes to function in microtubule-mediated retrograde organelle transport. Binds phosphatidylinositol 3-phosphate, phosphatidylinositol 4-phosphate, phosphatidylinositol 5-phosphate and phosphatidylinositol 3,5-bisphosphate, but not phosphatidylinositol 3,4-bisphosphate or phosphatidylinositol 4,5-bisphosphate. Required for normal phagosome clearing and normal activation of lysosomal enzymes in lysosomes from retinal pigment epithelium cells. Required for normal degradation of the lipofuscin component N-retinylidene-N-retinylethanolamine (A2E) in the eye. May function in membrane fusion and regulate the biogenesis of disk membranes of photoreceptor rod cells. The chain is Melanoregulin (Mreg) from Mus musculus (Mouse).